A 408-amino-acid chain; its full sequence is Aminopeptidase T (408 aa).

6 residues coordinate a divalent metal cation: E250, E316, E340, H345, H376, and D378.

It belongs to the peptidase M29 family. As to quaternary structure, homodimer. Co(2+) is required as a cofactor. The cofactor is Zn(2+). Mg(2+) serves as cofactor.

In terms of biological role, metal-dependent exopeptidase. In Thermus thermophilus (strain ATCC 27634 / DSM 579 / HB8), this protein is Aminopeptidase T.